Here is a 325-residue protein sequence, read N- to C-terminus: Homoserine O-succinyltransferase (325 aa).

The active-site Acyl-thioester intermediate is Cys142. Substrate is bound by residues Lys163 and Ser191. The active-site Proton acceptor is His234. Glu236 is an active-site residue. Position 248 (Arg248) interacts with substrate.

It belongs to the MetA family.

Its subcellular location is the cytoplasm. It catalyses the reaction L-homoserine + succinyl-CoA = O-succinyl-L-homoserine + CoA. The protein operates within amino-acid biosynthesis; L-methionine biosynthesis via de novo pathway; O-succinyl-L-homoserine from L-homoserine: step 1/1. Its function is as follows. Transfers a succinyl group from succinyl-CoA to L-homoserine, forming succinyl-L-homoserine. The polypeptide is Homoserine O-succinyltransferase (Bradyrhizobium japonicum).